A 272-amino-acid polypeptide reads, in one-letter code: F-box protein PP2-B10 (272 aa).

Residues 11–57 (SSPFDSFPEDCISYIISFTNPRDACVAATVSKTFESTVKSDIIWEKF) form the F-box domain.

Part of a SCF (ASK-cullin-F-box) protein ligase complex. Interacts with SKP1B/ASK2, ASK11 and ASK12.

Its pathway is protein modification; protein ubiquitination. Its function is as follows. Component of SCF(ASK-cullin-F-box) E3 ubiquitin ligase complexes, which may mediate the ubiquitination and subsequent proteasomal degradation of target proteins. The sequence is that of F-box protein PP2-B10 (PP2B10) from Arabidopsis thaliana (Mouse-ear cress).